The sequence spans 398 residues: Nematocin receptor 2 (398 aa).

The Extracellular portion of the chain corresponds to 1–25 (MNNNTLNITNQRTAAAMSQIYFLVV). Residues Asn-3 and Asn-7 are each glycosylated (N-linked (GlcNAc...) asparagine). A helical transmembrane segment spans residues 26 to 46 (YQTAVMIVSLLGNLFLLFVIF). Over 47–58 (RANQVMKRRVSP) the chain is Cytoplasmic. A helical transmembrane segment spans residues 59 to 79 (VQLLIIHTCVADLLFALLSLG). Residues 80–99 (TEILTLRTYPQYYGSNFVCK) are Extracellular-facing. An intrachain disulfide couples Cys-98 to Cys-173. A helical membrane pass occupies residues 100–120 (LMRYVQMFPMYASPFLLVAIS). Residues 121–143 (ADRYQAICRPLAHFRSSRYRRPN) are Cytoplasmic-facing. A helical transmembrane segment spans residues 144 to 164 (WMAAIAWGLALVLSIPQFFVW). Residues 165–187 (TKHSKTGRCSTIYGQNKNTVKIT) lie on the Extracellular side of the membrane. The chain crosses the membrane as a helical span at residues 188 to 208 (YVIMFNTLAWLLPSILAAVFY). Topologically, residues 209 to 271 (YCVCKAVRLS…DRKRVQTVRL (63 aa)) are cytoplasmic. Residues 272 to 292 (TITIVACNFFLWMPFCLINVI) form a helical membrane-spanning segment. Over 293–302 (QALWPEISHI) the chain is Extracellular. Residues 303-325 (MFINYVAILGNLNSCLNPWIYIL) traverse the membrane as a helical segment. The Cytoplasmic portion of the chain corresponds to 326-398 (FNRSHVRKAL…DSTSLKTNSN (73 aa)).

It belongs to the G-protein coupled receptor 1 family. Vasopressin/oxytocin receptor subfamily. As to expression, detected in the ADL sensory neurons, the RMED and RMEV motor neurons, and the PQR tail neuron. In males, detected in SPC tail neurons involved in spicule penetration and sperm transfer, and male-specific oblique muscles involved in vulval contact.

The protein resides in the cell membrane. Its function is as follows. Not directly activated by nematocin. May modulate activity of the nematocin receptor ntr-1, leading to reduced intracellular cAMP production. Plays a role in male mating behavior. This chain is Nematocin receptor 2, found in Caenorhabditis elegans.